The sequence spans 131 residues: Con-Ins Q1 (131 aa).

An N-terminal signal peptide occupies residues M1–G24. 4 disulfide bridges follow: C29-C107, C41-C110, C53-C123, and C109-C114. The propeptide at L59–R92 is c peptide. E118 bears the 4-carboxyglutamate; partial mark. S130 bears the Serine amide mark.

This sequence belongs to the insulin family. Heterodimer of A and B chains; disulfide-linked. Expressed by the venom gland.

Its subcellular location is the secreted. Its function is as follows. This venom insulin facilitates prey capture by rapidly inducing hypoglycemic shock. Intraperitoneal injection of this peptide into zebrafish lowers blood glucose with the same potency than human insulin. In vivo, when applied to water, this peptide reduces overall locomotor activity of zebrafish larvae, observed as a significant decrease in the percentage of time spent swimming and movement frequency. This Conus quercinus (Oak cone) protein is Con-Ins Q1.